The sequence spans 92 residues: Large ribosomal subunit protein eL37 (92 aa).

Zn(2+) contacts are provided by C19, C22, C34, and C37. A C4-type zinc finger spans residues 19–37 (CRRCGRSSYHIQKSKCAQC).

The protein belongs to the eukaryotic ribosomal protein eL37 family. Zn(2+) is required as a cofactor.

Its function is as follows. Binds to the 23S rRNA. The sequence is that of Large ribosomal subunit protein eL37 (RpL37) from Spodoptera frugiperda (Fall armyworm).